Consider the following 346-residue polypeptide: Dihydroorotase (346 aa).

2 residues coordinate Zn(2+): H17 and H19. Substrate contacts are provided by residues 19–21 (HVR) and N45. Zn(2+) is bound by residues K102, H139, and H177. K102 is modified (N6-carboxylysine). H139 provides a ligand contact to substrate. A substrate-binding site is contributed by L222. Residue D250 coordinates Zn(2+). D250 is an active-site residue. Residues H254 and A266 each coordinate substrate.

It belongs to the metallo-dependent hydrolases superfamily. DHOase family. Class II DHOase subfamily. Homodimer. Requires Zn(2+) as cofactor.

It carries out the reaction (S)-dihydroorotate + H2O = N-carbamoyl-L-aspartate + H(+). Its pathway is pyrimidine metabolism; UMP biosynthesis via de novo pathway; (S)-dihydroorotate from bicarbonate: step 3/3. Functionally, catalyzes the reversible cyclization of carbamoyl aspartate to dihydroorotate. The polypeptide is Dihydroorotase (Delftia acidovorans (strain DSM 14801 / SPH-1)).